The chain runs to 89 residues: uncharacterized protein (89 aa).

This is an uncharacterized protein from Methanocaldococcus jannaschii (strain ATCC 43067 / DSM 2661 / JAL-1 / JCM 10045 / NBRC 100440) (Methanococcus jannaschii).